We begin with the raw amino-acid sequence, 138 residues long: Putative pre-16S rRNA nuclease (138 aa).

It belongs to the YqgF nuclease family.

The protein localises to the cytoplasm. Could be a nuclease involved in processing of the 5'-end of pre-16S rRNA. The polypeptide is Putative pre-16S rRNA nuclease (Escherichia coli O7:K1 (strain IAI39 / ExPEC)).